We begin with the raw amino-acid sequence, 334 residues long: tRNA dimethylallyltransferase (334 aa).

23-30 (GPTGAGKT) provides a ligand contact to ATP. 25–30 (TGAGKT) contributes to the substrate binding site. Interaction with substrate tRNA regions lie at residues 53-56 (DSAL) and 177-181 (QRVQR).

Belongs to the IPP transferase family. Monomer. It depends on Mg(2+) as a cofactor.

The catalysed reaction is adenosine(37) in tRNA + dimethylallyl diphosphate = N(6)-dimethylallyladenosine(37) in tRNA + diphosphate. Its function is as follows. Catalyzes the transfer of a dimethylallyl group onto the adenine at position 37 in tRNAs that read codons beginning with uridine, leading to the formation of N6-(dimethylallyl)adenosine (i(6)A). The polypeptide is tRNA dimethylallyltransferase (Polynucleobacter necessarius subsp. necessarius (strain STIR1)).